The sequence spans 713 residues: Methionine--tRNA ligase (713 aa).

The 'HIGH' region motif lies at 31–41; sequence PYANGSIHLGH. Positions 162, 165, 175, and 178 each coordinate Zn(2+). Residues 348–352 carry the 'KMSKS' region motif; that stretch reads KMSKS. Lysine 351 is a binding site for ATP. The tRNA-binding domain maps to 609-713; it reads DFAKIDLRIV…DGAKAGMRVK (105 aa).

It belongs to the class-I aminoacyl-tRNA synthetase family. MetG type 1 subfamily. Homodimer. It depends on Zn(2+) as a cofactor.

The protein localises to the cytoplasm. The catalysed reaction is tRNA(Met) + L-methionine + ATP = L-methionyl-tRNA(Met) + AMP + diphosphate. Is required not only for elongation of protein synthesis but also for the initiation of all mRNA translation through initiator tRNA(fMet) aminoacylation. The chain is Methionine--tRNA ligase from Colwellia psychrerythraea (strain 34H / ATCC BAA-681) (Vibrio psychroerythus).